The following is a 625-amino-acid chain: MNAAPTVLQQQAQSLSEAVTQPIPGSRKIFVRGSRADLQVPMREIALTRTPTLFGGEENPPLSVYDTSGPYTDPRVAIDLAAGLAPLRAQWIAERGDTLALDGLSSSFGRGREHDARLDAVRFPARRLPRVARQGANVTQMHYARRGIITPEMEYVAIRENQRLEAVTDASLRKQHPGQAFGASIQQRITPEFVREEIARGRAILPNNINHPESEPMIIGRNFLTKINANIGNSAVSSGIAEEVEKLVWSIRWGGDTVMDLSTGKHIHETREWIIRNSPVPIGTVPIYQALEKVDGRAEELTWDIFRDTLIEQAEQGVDYFTIHAGVLLRYVPLTAKRVTGIVSRGGSIMAKWCLAHHKENFLYTHFEDICQIMKAYDVAFSLGDGLRPGCIADANDAAQFGELETLGELTKLAWQHDVQTMIEGPGHVPMQLIKENMDKQLRECGEAPFYTLGPLTTDIAPGYDHITSAIGAAMIGWFGTAMLCYVTPKEHLGLPNRQDVRDGIMAYKIAAHAADLAKGHPGAQVRDNALSKARFEFRWDDQFHLGLDPEKAKEFHDETLPKDAHKLAHFCSMCGPHFCSMKITQDVRDYANEHGVSEAQALSTGMQEKSAQFVAQGAQVYRAT.

Substrate-binding positions include N230, M259, Y288, H324, S344–G346, D385–R388, and E424. H428 contributes to the Zn(2+) binding site. Y451 serves as a coordination point for substrate. Residue H492 coordinates Zn(2+). 3 residues coordinate [4Fe-4S] cluster: C572, C575, and C580.

Belongs to the ThiC family. As to quaternary structure, homodimer. It depends on [4Fe-4S] cluster as a cofactor.

It carries out the reaction 5-amino-1-(5-phospho-beta-D-ribosyl)imidazole + S-adenosyl-L-methionine = 4-amino-2-methyl-5-(phosphooxymethyl)pyrimidine + CO + 5'-deoxyadenosine + formate + L-methionine + 3 H(+). It participates in cofactor biosynthesis; thiamine diphosphate biosynthesis. Catalyzes the synthesis of the hydroxymethylpyrimidine phosphate (HMP-P) moiety of thiamine from aminoimidazole ribotide (AIR) in a radical S-adenosyl-L-methionine (SAM)-dependent reaction. This Xanthomonas axonopodis pv. citri (strain 306) protein is Phosphomethylpyrimidine synthase.